A 132-amino-acid polypeptide reads, in one-letter code: Small ribosomal subunit protein uS12 (132 aa).

A 3-methylthioaspartic acid modification is found at Asp-89.

Belongs to the universal ribosomal protein uS12 family. Part of the 30S ribosomal subunit. Contacts proteins S8 and S17. May interact with IF1 in the 30S initiation complex.

In terms of biological role, with S4 and S5 plays an important role in translational accuracy. Functionally, interacts with and stabilizes bases of the 16S rRNA that are involved in tRNA selection in the A site and with the mRNA backbone. Located at the interface of the 30S and 50S subunits, it traverses the body of the 30S subunit contacting proteins on the other side and probably holding the rRNA structure together. The combined cluster of proteins S8, S12 and S17 appears to hold together the shoulder and platform of the 30S subunit. The chain is Small ribosomal subunit protein uS12 from Campylobacter curvus (strain 525.92).